A 284-amino-acid chain; its full sequence is NAD kinase (284 aa).

The active-site Proton acceptor is the D67. NAD(+) is bound by residues 67 to 68 (DG), 141 to 142 (ND), R152, K169, D171, 182 to 187 (TGYSLS), and Q241.

Belongs to the NAD kinase family. A divalent metal cation serves as cofactor.

Its subcellular location is the cytoplasm. The enzyme catalyses NAD(+) + ATP = ADP + NADP(+) + H(+). Its function is as follows. Involved in the regulation of the intracellular balance of NAD and NADP, and is a key enzyme in the biosynthesis of NADP. Catalyzes specifically the phosphorylation on 2'-hydroxyl of the adenosine moiety of NAD to yield NADP. The sequence is that of NAD kinase from Geobacter sulfurreducens (strain ATCC 51573 / DSM 12127 / PCA).